Reading from the N-terminus, the 117-residue chain is Hemerythrin subunit beta (117 aa).

The Fe cation site is built by His-24, His-53, Glu-57, His-72, His-76, His-105, and Asp-110.

It belongs to the hemerythrin family. As to quaternary structure, octamer composed of two types of chains: alpha and beta.

Functionally, hemerythrin is a respiratory protein in blood cells of certain marine worms. The oxygen-binding site in each chain contains two iron atoms. In Lingula reevii (Inarticulated brachiopod), this protein is Hemerythrin subunit beta.